We begin with the raw amino-acid sequence, 582 residues long: Aspartate--tRNA(Asp/Asn) ligase (582 aa).

E177 serves as a coordination point for L-aspartate. The segment at 201–204 (QLFK) is aspartate. L-aspartate is bound at residue R223. ATP contacts are provided by residues 223-225 (RDE) and Q232. Residue H447 coordinates L-aspartate. E481 contributes to the ATP binding site. R488 is an L-aspartate binding site. Residue 533-536 (GLDR) participates in ATP binding.

It belongs to the class-II aminoacyl-tRNA synthetase family. Type 1 subfamily. As to quaternary structure, homodimer.

The protein resides in the cytoplasm. The enzyme catalyses tRNA(Asx) + L-aspartate + ATP = L-aspartyl-tRNA(Asx) + AMP + diphosphate. Functionally, aspartyl-tRNA synthetase with relaxed tRNA specificity since it is able to aspartylate not only its cognate tRNA(Asp) but also tRNA(Asn). Reaction proceeds in two steps: L-aspartate is first activated by ATP to form Asp-AMP and then transferred to the acceptor end of tRNA(Asp/Asn). The chain is Aspartate--tRNA(Asp/Asn) ligase from Chlamydia trachomatis serovar L2 (strain ATCC VR-902B / DSM 19102 / 434/Bu).